The sequence spans 439 residues: Proline--tRNA ligase (439 aa).

This sequence belongs to the class-II aminoacyl-tRNA synthetase family. ProS type 2 subfamily. Homodimer.

Its subcellular location is the cytoplasm. It catalyses the reaction tRNA(Pro) + L-proline + ATP = L-prolyl-tRNA(Pro) + AMP + diphosphate. Catalyzes the attachment of proline to tRNA(Pro) in a two-step reaction: proline is first activated by ATP to form Pro-AMP and then transferred to the acceptor end of tRNA(Pro). In Phenylobacterium zucineum (strain HLK1), this protein is Proline--tRNA ligase.